The primary structure comprises 121 residues: Basic phospholipase A2 homolog BnSP-7 (121 aa).

Intrachain disulfides connect Cys26–Cys115, Cys28–Cys44, Cys43–Cys95, Cys49–Cys121, Cys50–Cys88, Cys57–Cys81, and Cys75–Cys86. The important for membrane-damaging activities in eukaryotes and bacteria; heparin-binding stretch occupies residues Lys105 to Lys117.

Belongs to the phospholipase A2 family. Group II subfamily. K49 sub-subfamily. In terms of assembly, homodimer; non-covalently linked (probable alternative/compact dimer conformation in solution). Expressed by the venom gland.

The protein resides in the secreted. Heparin inhibits the neuromuscular effect, myotoxin activity and edema-inducing effects. Bromophenacyl bromide (BPB) inhibits the neuromuscular effect, the myotoxin activity and edema-inducing effects. Snake venom phospholipase A2 (PLA2) that lacks enzymatic activity. Is myotoxic and displays edema-inducing activity. Displays bactericidal activity and promotes the blockage of the neuromuscular contraction of the chick biventer cervicis muscle. Also disrupts artificial membranes, and provokes tissue damages characterized by edema, necrosis and inflammation. May act as pro-inflammatory mediators, inducing metalloproteinase and cytokine production from the inflammatory and satellite cells. A model of myotoxic mechanism has been proposed: an apo Lys49-PLA2 is activated by the entrance of a hydrophobic molecule (e.g. fatty acid) at the hydrophobic channel of the protein leading to a reorientation of a monomer. This reorientation causes a transition between 'inactive' to 'active' states, causing alignment of C-terminal and membrane-docking sites (MDoS) side-by-side and putting the membrane-disruption sites (MDiS) in the same plane, exposed to solvent and in a symmetric position for both monomers. The MDoS region stabilizes the toxin on membrane by the interaction of charged residues with phospholipid head groups. Subsequently, the MDiS region destabilizes the membrane with penetration of hydrophobic residues. This insertion causes a disorganization of the membrane, allowing an uncontrolled influx of ions (i.e. calcium and sodium), and eventually triggering irreversible intracellular alterations and cell death. This is Basic phospholipase A2 homolog BnSP-7 from Bothrops pauloensis (Neuwied's lancehead).